A 288-amino-acid chain; its full sequence is GCN5-related N-acetyltransferase 6, chloroplastic (288 aa).

The N-terminal 111 residues, 1–111 (MSTISIHRTE…YWTAAWLRAE (111 aa)), are a transit peptide targeting the chloroplast. Residues 151-288 (SCIVAVKKEE…DDTYLLQYTS (138 aa)) form the N-acetyltransferase domain. Acetyl-CoA-binding positions include 215 to 217 (LCV), 223 to 228 (RQGIAC), 254 to 256 (NSV), and Tyr261. Tyr261 functions as the Proton donor in the catalytic mechanism.

This sequence belongs to the acetyltransferase family. GNAT subfamily. In terms of assembly, oligomer. Post-translationally, autoacetylated. As to expression, expressed in green tissues and in roots.

The protein resides in the plastid. The protein localises to the chloroplast. It is found in the cytoplasm. Its subcellular location is the perinuclear region. The enzyme catalyses an N-terminal L-alpha-aminoacyl-[protein] + acetyl-CoA = N-terminal N(alpha)-acetyl-L-alpha-aminoacyl-[protein] + CoA + H(+). The catalysed reaction is L-lysyl-[protein] + acetyl-CoA = N(6)-acetyl-L-lysyl-[protein] + CoA + H(+). It carries out the reaction N-terminal L-alanyl-[protein] + acetyl-CoA = N-terminal N(alpha)-acetyl-L-alanyl-[protein] + CoA + H(+). It catalyses the reaction N-terminal L-seryl-[protein] + acetyl-CoA = N-terminal N(alpha)-acetyl-L-seryl-[protein] + CoA + H(+). The enzyme catalyses N-terminal L-threonyl-[protein] + acetyl-CoA = N-terminal N(alpha)-acetyl-L-threonyl-[protein] + CoA + H(+). The catalysed reaction is N-terminal L-methionyl-[protein] + acetyl-CoA = N-terminal N(alpha)-acetyl-L-methionyl-[protein] + CoA + H(+). It carries out the reaction N-terminal L-valyl-[protein] + acetyl-CoA = N-terminal N(alpha)-acetyl-L-valyl-[protein] + CoA + H(+). In terms of biological role, protein acetyltransferase with dual specificity triggering both N-alpha-acetylation (NTA), with a large spectrum of modified N-termini, including methionine, alanine, serine, threonine and to a lower extent valine as substrates, and epsilon-lysine acetylation (KA). The chain is GCN5-related N-acetyltransferase 6, chloroplastic from Arabidopsis thaliana (Mouse-ear cress).